The sequence spans 95 residues: Small ribosomal subunit protein uS19 (95 aa).

The protein belongs to the universal ribosomal protein uS19 family.

Protein S19 forms a complex with S13 that binds strongly to the 16S ribosomal RNA. The chain is Small ribosomal subunit protein uS19 from Chloroflexus aurantiacus (strain ATCC 29366 / DSM 635 / J-10-fl).